Consider the following 217-residue polypeptide: IMPACT family member YvyE (217 aa).

It belongs to the IMPACT family.

The sequence is that of IMPACT family member YvyE (yvyE) from Bacillus subtilis (strain 168).